The following is a 122-amino-acid chain: UPF0482 protein Spro_2288 (122 aa).

A signal peptide spans methionine 1–alanine 31. The tract at residues serine 46–asparagine 71 is disordered.

The protein belongs to the UPF0482 family.

This chain is UPF0482 protein Spro_2288, found in Serratia proteamaculans (strain 568).